Reading from the N-terminus, the 941-residue chain is Bifunctional glutamine synthetase adenylyltransferase/adenylyl-removing enzyme (941 aa).

Residues 1–431 (MSSAPPFAAA…TFRNAFRLAG (431 aa)) form an adenylyl removase region. The adenylyl transferase stretch occupies residues 447-941 (NGHGMRPHAG…DGTIAQAEVK (495 aa)).

This sequence belongs to the GlnE family. Requires Mg(2+) as cofactor.

The enzyme catalyses [glutamine synthetase]-O(4)-(5'-adenylyl)-L-tyrosine + phosphate = [glutamine synthetase]-L-tyrosine + ADP. The catalysed reaction is [glutamine synthetase]-L-tyrosine + ATP = [glutamine synthetase]-O(4)-(5'-adenylyl)-L-tyrosine + diphosphate. Its function is as follows. Involved in the regulation of glutamine synthetase GlnA, a key enzyme in the process to assimilate ammonia. When cellular nitrogen levels are high, the C-terminal adenylyl transferase (AT) inactivates GlnA by covalent transfer of an adenylyl group from ATP to specific tyrosine residue of GlnA, thus reducing its activity. Conversely, when nitrogen levels are low, the N-terminal adenylyl removase (AR) activates GlnA by removing the adenylyl group by phosphorolysis, increasing its activity. The regulatory region of GlnE binds the signal transduction protein PII (GlnB) which indicates the nitrogen status of the cell. The protein is Bifunctional glutamine synthetase adenylyltransferase/adenylyl-removing enzyme of Bordetella bronchiseptica (strain ATCC BAA-588 / NCTC 13252 / RB50) (Alcaligenes bronchisepticus).